The primary structure comprises 90 residues: Guanine nucleotide-binding protein subunit gamma (90 aa).

Cys86 carries S-palmitoyl cysteine lipidation. Cys87 carries the post-translational modification Cysteine methyl ester. The S-farnesyl cysteine moiety is linked to residue Cys87. Positions 88–90 (CIM) are cleaved as a propeptide — removed in mature form.

The protein belongs to the G protein gamma family. G proteins are composed of 3 units, alpha, beta and gamma.

It localises to the membrane. The protein is Guanine nucleotide-binding protein subunit gamma of Eremothecium gossypii (strain ATCC 10895 / CBS 109.51 / FGSC 9923 / NRRL Y-1056) (Yeast).